The primary structure comprises 262 residues: Probable DNA polymerase sliding clamp 1 (262 aa).

Residues 67–86 (KCEHTYELGVNVLNMFKLLR) mediate DNA binding.

It belongs to the PCNA family.

In terms of biological role, sliding clamp subunit. Responsible for tethering the catalytic subunit of DNA polymerase to DNA during high-speed replication. The chain is Probable DNA polymerase sliding clamp 1 from Chlorella (PBCV-1).